The following is an 883-amino-acid chain: Translation initiation factor IF-2 (883 aa).

Residues 32-45 show a composition bias toward polar residues; that stretch reads NDLNGKNNSNSSIN. 2 disordered regions span residues 32–216 and 251–275; these read NDLN…QNKY and RKLG…AETE. Residues 46-62 are compositionally biased toward basic and acidic residues; that stretch reads LDKHNNKVEYSQNRDNR. Positions 75-216 are enriched in polar residues; the sequence is GGYSQNRDNR…VGKNTSQNKY (142 aa). Residues 251-260 show a composition bias toward basic and acidic residues; it reads RKLGEKKKQQ. In terms of domain architecture, tr-type G spans 381–554; the sequence is EKPPVITIMG…DMMLLKANPS (174 aa). Residues 390-397 form a G1 region; sequence GHVDHGKT. 390-397 lines the GTP pocket; the sequence is GHVDHGKT. Residues 415-419 form a G2 region; sequence GITQH. Residues 436 to 439 are G3; sequence DTPG. GTP contacts are provided by residues 436 to 440 and 490 to 493; these read DTPGH and NKID. The segment at 490 to 493 is G4; it reads NKID. The tract at residues 526–528 is G5; that stretch reads SAL.

This sequence belongs to the TRAFAC class translation factor GTPase superfamily. Classic translation factor GTPase family. IF-2 subfamily.

The protein localises to the cytoplasm. One of the essential components for the initiation of protein synthesis. Protects formylmethionyl-tRNA from spontaneous hydrolysis and promotes its binding to the 30S ribosomal subunits. Also involved in the hydrolysis of GTP during the formation of the 70S ribosomal complex. The polypeptide is Translation initiation factor IF-2 (Borrelia garinii subsp. bavariensis (strain ATCC BAA-2496 / DSM 23469 / PBi) (Borreliella bavariensis)).